A 215-amino-acid chain; its full sequence is 3-isopropylmalate dehydratase small subunit (215 aa).

The protein belongs to the LeuD family. LeuD type 1 subfamily. Heterodimer of LeuC and LeuD.

The catalysed reaction is (2R,3S)-3-isopropylmalate = (2S)-2-isopropylmalate. The protein operates within amino-acid biosynthesis; L-leucine biosynthesis; L-leucine from 3-methyl-2-oxobutanoate: step 2/4. In terms of biological role, catalyzes the isomerization between 2-isopropylmalate and 3-isopropylmalate, via the formation of 2-isopropylmaleate. The chain is 3-isopropylmalate dehydratase small subunit from Acinetobacter baumannii (strain AB307-0294).